Consider the following 151-residue polypeptide: Putative pre-16S rRNA nuclease (151 aa).

This sequence belongs to the YqgF nuclease family.

Its subcellular location is the cytoplasm. Could be a nuclease involved in processing of the 5'-end of pre-16S rRNA. The polypeptide is Putative pre-16S rRNA nuclease (Prochlorococcus marinus (strain MIT 9515)).